Here is a 532-residue protein sequence, read N- to C-terminus: MGMFRVEYLLLGILVIGVRSRDIPNCDFFDTVQLRESEKLCNGSYRYEDVVIPAKLTGKYDYEIDYDGDRVSVPKHIRGCVCKLKTCIRFCCHHKKLMAGNLCSQDVYENLTYEYTLDITQLNGSVIKKHVLNDMVVQQDLPLPCERHYSLDAETSTYDMWSLYENGSLFRHFDQRYLSKQEFCLQPNPTSTGKNYSLIVAFNCIQKPSMKMAYGRFECVRKSRLSNASIPVKFSSVFFMVITIAAYLWLPKFRSLHGKCCNLYFICLAITFLLNVISLFGIFELKTPICYLTGYAGYFTVMATFLWLSVISFDVWRRFAMRKFQVFYKNKRSSFFNYNIIVWSSAGLLTCIIFLVDQFVETNLDNPYNPAVGVFSCWIFTNGWSATFYFYAPLAILIILNCASFFLTTRYIYVENKQNQKVLNNSEPQKLSRNHANYRIYFRLFIIMGGSWFLEIIAFICEMENMWKPLIILNDYINCSQGIIIFVATFCNHEMFRLIRKRIQNRNITSLELTNTSRPVESEKMADVELGK.

The N-terminal stretch at 1–20 (MGMFRVEYLLLGILVIGVRS) is a signal peptide. Residues 21–229 (RDIPNCDFFD…VRKSRLSNAS (209 aa)) lie on the Extracellular side of the membrane. Intrachain disulfides connect Cys26–Cys80, Cys82–Cys87, Cys91–Cys184, Cys92–Cys103, and Cys145–Cys204. N-linked (GlcNAc...) asparagine glycosylation occurs at Asn42. N-linked (GlcNAc...) asparagine glycans are attached at residues Asn110, Asn123, Asn166, Asn195, and Asn227. A helical membrane pass occupies residues 230 to 250 (IPVKFSSVFFMVITIAAYLWL). Topologically, residues 251–262 (PKFRSLHGKCCN) are cytoplasmic. The chain crosses the membrane as a helical span at residues 263–283 (LYFICLAITFLLNVISLFGIF). The Extracellular portion of the chain corresponds to 284-290 (ELKTPIC). A helical transmembrane segment spans residues 291 to 311 (YLTGYAGYFTVMATFLWLSVI). Residues 312–339 (SFDVWRRFAMRKFQVFYKNKRSSFFNYN) lie on the Cytoplasmic side of the membrane. The chain crosses the membrane as a helical span at residues 340–360 (IIVWSSAGLLTCIIFLVDQFV). At 361–386 (ETNLDNPYNPAVGVFSCWIFTNGWSA) the chain is on the extracellular side. The chain crosses the membrane as a helical span at residues 387–407 (TFYFYAPLAILIILNCASFFL). The Cytoplasmic segment spans residues 408 to 439 (TTRYIYVENKQNQKVLNNSEPQKLSRNHANYR). A helical membrane pass occupies residues 440–460 (IYFRLFIIMGGSWFLEIIAFI). Residues 461–469 (CEMENMWKP) lie on the Extracellular side of the membrane. Residues 470 to 490 (LIILNDYINCSQGIIIFVATF) form a helical membrane-spanning segment. The Cytoplasmic segment spans residues 491–532 (CNHEMFRLIRKRIQNRNITSLELTNTSRPVESEKMADVELGK).

Belongs to the G-protein coupled receptor 2 family. Mth subfamily.

The protein localises to the cell membrane. This Drosophila melanogaster (Fruit fly) protein is Probable G-protein coupled receptor Mth-like 11 (mthl11).